The sequence spans 336 residues: Phospho-N-acetylmuramoyl-pentapeptide-transferase (336 aa).

The next 10 helical transmembrane spans lie at 3–23, 53–73, 78–98, 118–138, 143–163, 174–194, 200–220, 226–246, 251–271, and 316–336; these read LTLI…PYFI, GGTV…LFSI, SLAL…IGFL, LALQ…PSGI, VFGY…FWVV, GIDG…GVIA, FDVL…FCFN, VFMG…ISIA, WTLL…MLQV, and AFLW…LYVF.

It belongs to the glycosyltransferase 4 family. MraY subfamily. The cofactor is Mg(2+).

It localises to the cell membrane. It carries out the reaction UDP-N-acetyl-alpha-D-muramoyl-L-alanyl-gamma-D-glutamyl-L-lysyl-D-alanyl-D-alanine + di-trans,octa-cis-undecaprenyl phosphate = Mur2Ac(oyl-L-Ala-gamma-D-Glu-L-Lys-D-Ala-D-Ala)-di-trans,octa-cis-undecaprenyl diphosphate + UMP. Its pathway is cell wall biogenesis; peptidoglycan biosynthesis. Functionally, catalyzes the initial step of the lipid cycle reactions in the biosynthesis of the cell wall peptidoglycan: transfers peptidoglycan precursor phospho-MurNAc-pentapeptide from UDP-MurNAc-pentapeptide onto the lipid carrier undecaprenyl phosphate, yielding undecaprenyl-pyrophosphoryl-MurNAc-pentapeptide, known as lipid I. This is Phospho-N-acetylmuramoyl-pentapeptide-transferase from Streptococcus pyogenes serotype M4 (strain MGAS10750).